The following is a 170-amino-acid chain: uncharacterized protein (170 aa).

This is an uncharacterized protein from Arabidopsis thaliana (Mouse-ear cress).